Here is a 241-residue protein sequence, read N- to C-terminus: MATVSMRDMLQAGVHFGHQTRYWNPKMKPFIFGARNKVHIINLEKTVPLFNEALAELKKISSRKGKILFVGTKRAASEAVKEAANNCDQFFVNHRWLGGMLTNWKTVRQSIKRLKDLEIQSQDGTFDKLTKKEALMRTRELNKLENSLGGIKDMGGLPDALFVVDADHEHIAIKEANNLGIPVFSIVDTNSDPDGVDFIIPGNDDAIRAVKLYLNAVADAVKEGRSQDLAVQAEESFVEAE.

Belongs to the universal ribosomal protein uS2 family.

In Yersinia enterocolitica serotype O:8 / biotype 1B (strain NCTC 13174 / 8081), this protein is Small ribosomal subunit protein uS2.